Reading from the N-terminus, the 357-residue chain is Spermatogenesis- and oogenesis-specific basic helix-loop-helix-containing protein 1 (357 aa).

Residues 1–14 (MASGGHERANEDYR) are compositionally biased toward basic and acidic residues. The segment at 1–40 (MASGGHERANEDYRVSGITGCSKTPQPETQDSLQTSSQSS) is disordered. Positions 19-31 (TGCSKTPQPETQD) are enriched in polar residues. The bHLH domain maps to 54–105 (PSLRRNVVSERERRRRISLSCEHLRALLPQFDGRREDMASVLEMSVYFLQLA). Positions 145–210 (KPDSGIAKPS…EPESSSLGPG (66 aa)) are disordered. The span at 200–209 (SEPESSSLGP) shows a compositional bias: low complexity.

In terms of assembly, forms both hetero- and homodimers with SOHLH2. In terms of tissue distribution, in males, it is mainly expressed in testis, while in females it is mainly expressed in ovary. In testis, it is exclusively expressed in spermatogonia, with a preference for prespermatogonia and type A spermatogonia. In ovary, it is detected in germ cell cysts, primordial follicles, and primary follicles but is undetectable by the secondary follicle stage (at protein level). Expressed in the majority of spermatogonia in adult animals, but not in the most undifferentiated spermatogonial population.

The protein localises to the cytoplasm. It is found in the nucleus. Functionally, transcription regulator of both male and female germline differentiation. Suppresses genes involved in spermatogonial stem cells maintenance, and induces genes important for spermatogonial differentiation. Coordinates oocyte differentiation without affecting meiosis I. This chain is Spermatogenesis- and oogenesis-specific basic helix-loop-helix-containing protein 1 (Sohlh1), found in Mus musculus (Mouse).